The chain runs to 189 residues: GTP cyclohydrolase 1 (189 aa).

Positions 79, 82, and 150 each coordinate Zn(2+).

It belongs to the GTP cyclohydrolase I family. Homomer.

The enzyme catalyses GTP + H2O = 7,8-dihydroneopterin 3'-triphosphate + formate + H(+). The protein operates within cofactor biosynthesis; 7,8-dihydroneopterin triphosphate biosynthesis; 7,8-dihydroneopterin triphosphate from GTP: step 1/1. The protein is GTP cyclohydrolase 1 of Rickettsia rickettsii (strain Iowa).